Reading from the N-terminus, the 404-residue chain is F-box protein At2g17036 (404 aa).

Positions 2-50 (MDWATLPKDLLDLISKCLESSFDLIQFRSVCSSWRSAAGPKRLLWAHNL) constitute an F-box domain.

The protein is F-box protein At2g17036 of Arabidopsis thaliana (Mouse-ear cress).